Here is a 72-residue protein sequence, read N- to C-terminus: Translation initiation factor IF-1 1 (72 aa).

The S1-like domain occupies 1 to 72; the sequence is MSKDDVIQMQ…TRARIVFRSK (72 aa).

It belongs to the IF-1 family. In terms of assembly, component of the 30S ribosomal translation pre-initiation complex which assembles on the 30S ribosome in the order IF-2 and IF-3, IF-1 and N-formylmethionyl-tRNA(fMet); mRNA recruitment can occur at any time during PIC assembly.

It is found in the cytoplasm. Its function is as follows. One of the essential components for the initiation of protein synthesis. Stabilizes the binding of IF-2 and IF-3 on the 30S subunit to which N-formylmethionyl-tRNA(fMet) subsequently binds. Helps modulate mRNA selection, yielding the 30S pre-initiation complex (PIC). Upon addition of the 50S ribosomal subunit IF-1, IF-2 and IF-3 are released leaving the mature 70S translation initiation complex. The polypeptide is Translation initiation factor IF-1 1 (Bordetella avium (strain 197N)).